A 342-amino-acid polypeptide reads, in one-letter code: Holliday junction branch migration complex subunit RuvB (342 aa).

The large ATPase domain (RuvB-L) stretch occupies residues 1–185 (MTVKPLRDVT…FPIQERLEYY (185 aa)). ATP contacts are provided by residues L24, R25, G66, K69, T70, S71, 132–134 (EDY), R175, Y185, and R222. A Mg(2+)-binding site is contributed by T70. The small ATPAse domain (RuvB-S) stretch occupies residues 186-256 (GPAELKEIAV…VVDRTLRRLE (71 aa)). Residues 259–342 (ARGLDAMDRR…RSGGKQGSLV (84 aa)) form a head domain (RuvB-H) region. Residues R314 and R319 each coordinate DNA.

It belongs to the RuvB family. As to quaternary structure, homohexamer. Forms an RuvA(8)-RuvB(12)-Holliday junction (HJ) complex. HJ DNA is sandwiched between 2 RuvA tetramers; dsDNA enters through RuvA and exits via RuvB. An RuvB hexamer assembles on each DNA strand where it exits the tetramer. Each RuvB hexamer is contacted by two RuvA subunits (via domain III) on 2 adjacent RuvB subunits; this complex drives branch migration. In the full resolvosome a probable DNA-RuvA(4)-RuvB(12)-RuvC(2) complex forms which resolves the HJ.

It localises to the cytoplasm. The catalysed reaction is ATP + H2O = ADP + phosphate + H(+). The RuvA-RuvB-RuvC complex processes Holliday junction (HJ) DNA during genetic recombination and DNA repair, while the RuvA-RuvB complex plays an important role in the rescue of blocked DNA replication forks via replication fork reversal (RFR). RuvA specifically binds to HJ cruciform DNA, conferring on it an open structure. The RuvB hexamer acts as an ATP-dependent pump, pulling dsDNA into and through the RuvAB complex. RuvB forms 2 homohexamers on either side of HJ DNA bound by 1 or 2 RuvA tetramers; 4 subunits per hexamer contact DNA at a time. Coordinated motions by a converter formed by DNA-disengaged RuvB subunits stimulates ATP hydrolysis and nucleotide exchange. Immobilization of the converter enables RuvB to convert the ATP-contained energy into a lever motion, pulling 2 nucleotides of DNA out of the RuvA tetramer per ATP hydrolyzed, thus driving DNA branch migration. The RuvB motors rotate together with the DNA substrate, which together with the progressing nucleotide cycle form the mechanistic basis for DNA recombination by continuous HJ branch migration. Branch migration allows RuvC to scan DNA until it finds its consensus sequence, where it cleaves and resolves cruciform DNA. The polypeptide is Holliday junction branch migration complex subunit RuvB (Anaeromyxobacter dehalogenans (strain 2CP-C)).